Here is a 297-residue protein sequence, read N- to C-terminus: Protoheme IX farnesyltransferase (297 aa).

A run of 9 helical transmembrane segments spans residues 26–46, 48–68, 96–116, 120–140, 147–167, 174–194, 218–238, 243–263, and 276–296; these read VTQL…PGMV, YPVL…AFAV, FHII…LWNF, LTMW…TWLL, NIVI…AAVT, AWLL…ALAL, LLNI…PYIY, IIYL…VIAL, and FRFS…DHYF.

This sequence belongs to the UbiA prenyltransferase family. Protoheme IX farnesyltransferase subfamily.

It localises to the cell membrane. It catalyses the reaction heme b + (2E,6E)-farnesyl diphosphate + H2O = Fe(II)-heme o + diphosphate. It participates in porphyrin-containing compound metabolism; heme O biosynthesis; heme O from protoheme: step 1/1. In terms of biological role, converts heme B (protoheme IX) to heme O by substitution of the vinyl group on carbon 2 of heme B porphyrin ring with a hydroxyethyl farnesyl side group. The polypeptide is Protoheme IX farnesyltransferase (Polynucleobacter asymbioticus (strain DSM 18221 / CIP 109841 / QLW-P1DMWA-1) (Polynucleobacter necessarius subsp. asymbioticus)).